Reading from the N-terminus, the 253-residue chain is 5-oxoprolinase subunit A (253 aa).

This sequence belongs to the LamB/PxpA family. Forms a complex composed of PxpA, PxpB and PxpC.

The catalysed reaction is 5-oxo-L-proline + ATP + 2 H2O = L-glutamate + ADP + phosphate + H(+). Catalyzes the cleavage of 5-oxoproline to form L-glutamate coupled to the hydrolysis of ATP to ADP and inorganic phosphate. The chain is 5-oxoprolinase subunit A from Bacillus cereus (strain AH187).